The following is a 365-amino-acid chain: MAPTTITALAKEKTLNLDFVRDEDERPKVAYNQFSNEIPIISLAGLDDDSDGRRPEICRKIVKACEDWGIFQVVDHGIDSGLISEMTRLSREFFALPAEEKLEYDTTGGKRGGFTISTVLQGDDAMDWREFVTYFSYPINARDYSRWPKKPEGWRSTTEVYSEKLMVLGAKLLEVLSEAMGLEKGDLTKACVDMEQKVLINYYPTCPQPDLTLGVRRHTDPGTITILLQDMVGGLQATRDGGKTWITVQPVEGAFVVNLGDHGHYLSNGRFRNADHQAVVNSTSSRLSIATFQNPAQNAIVYPLKIREGEKAILDEAITYAEMYKKCMTKHIEVATRKKLAKEKRLQDEKAKLEMKSKSADENLA.

Residues His76, His218, Asp220, and His276 each coordinate Fe cation. Positions 194-295 (MEQKVLINYY…RLSIATFQNP (102 aa)) constitute a Fe2OG dioxygenase domain. Residues 345–365 (RLQDEKAKLEMKSKSADENLA) form a disordered region.

Belongs to the iron/ascorbate-dependent oxidoreductase family. Fe cation serves as cofactor. It depends on L-ascorbate as a cofactor.

It is found in the cytoplasm. The catalysed reaction is a flavanone + 2-oxoglutarate + O2 = a flavone + succinate + CO2 + H2O. The protein operates within secondary metabolite biosynthesis; flavonoid biosynthesis. In terms of biological role, involved in the conversion of naringenin to apigenin. Acts via a direct 2,3-desaturation of flavanones instead of a sequential hydroxylation/dehydratation mechanism. This Petroselinum crispum (Parsley) protein is Flavone synthase (FNSI).